The chain runs to 217 residues: Peroxiredoxin Q, chloroplastic (217 aa).

A chloroplast-targeting transit peptide spans 1-66 (MAFAASTACC…RRRAASTGIV (66 aa)). The Thioredoxin domain maps to 70–217 (VSKGSVPPNF…GETLKIIQNL (148 aa)). The active-site Cysteine sulfenic acid (-SOH) intermediate is C112. C112 and C117 are joined by a disulfide.

It belongs to the peroxiredoxin family. BCP/PrxQ subfamily. In terms of assembly, monomer.

It is found in the plastid. It localises to the chloroplast thylakoid lumen. The catalysed reaction is a hydroperoxide + [thioredoxin]-dithiol = an alcohol + [thioredoxin]-disulfide + H2O. Functionally, thiol-specific peroxidase that catalyzes the reduction of hydrogen peroxide and organic hydroperoxides to water and alcohols, respectively. Plays a role in cell protection against oxidative stress by detoxifying peroxides. This Triticum aestivum (Wheat) protein is Peroxiredoxin Q, chloroplastic (PRX1).